Here is a 362-residue protein sequence, read N- to C-terminus: Phosphoserine aminotransferase (362 aa).

L-glutamate-binding residues include Ser9 and Arg42. Pyridoxal 5'-phosphate-binding positions include 76-77, Trp102, Thr153, Asp174, and Gln197; that span reads GR. Lys198 bears the N6-(pyridoxal phosphate)lysine mark. 239–240 contributes to the pyridoxal 5'-phosphate binding site; that stretch reads NT.

Belongs to the class-V pyridoxal-phosphate-dependent aminotransferase family. SerC subfamily. As to quaternary structure, homodimer. It depends on pyridoxal 5'-phosphate as a cofactor.

It is found in the cytoplasm. The catalysed reaction is O-phospho-L-serine + 2-oxoglutarate = 3-phosphooxypyruvate + L-glutamate. The enzyme catalyses 4-(phosphooxy)-L-threonine + 2-oxoglutarate = (R)-3-hydroxy-2-oxo-4-phosphooxybutanoate + L-glutamate. It participates in amino-acid biosynthesis; L-serine biosynthesis; L-serine from 3-phospho-D-glycerate: step 2/3. The protein operates within cofactor biosynthesis; pyridoxine 5'-phosphate biosynthesis; pyridoxine 5'-phosphate from D-erythrose 4-phosphate: step 3/5. Functionally, catalyzes the reversible conversion of 3-phosphohydroxypyruvate to phosphoserine and of 3-hydroxy-2-oxo-4-phosphonooxybutanoate to phosphohydroxythreonine. Is involved in both pyridoxine and serine biosynthesis. The polypeptide is Phosphoserine aminotransferase (serC) (Escherichia coli (strain K12)).